The primary structure comprises 67 residues: Large ribosomal subunit protein bL32 (67 aa).

Over residues 1 to 19 (MAVPKRKQSRANTHARRSQ) the composition is skewed to basic residues. A disordered region spans residues 1–20 (MAVPKRKQSRANTHARRSQW).

Belongs to the bacterial ribosomal protein bL32 family.

This is Large ribosomal subunit protein bL32 from Leifsonia xyli subsp. xyli (strain CTCB07).